Reading from the N-terminus, the 600-residue chain is Aspartate--tRNA(Asp/Asn) ligase (600 aa).

Residue Glu187 participates in L-aspartate binding. The interval Gln211–Lys214 is aspartate. Residues Arg233 and His463 each contribute to the L-aspartate site. Arg233–Glu235 is an ATP binding site. Glu497 provides a ligand contact to ATP. Arg504 is a binding site for L-aspartate. Gly549–Arg552 contacts ATP.

It belongs to the class-II aminoacyl-tRNA synthetase family. Type 1 subfamily. Homodimer.

It is found in the cytoplasm. It carries out the reaction tRNA(Asx) + L-aspartate + ATP = L-aspartyl-tRNA(Asx) + AMP + diphosphate. Its function is as follows. Aspartyl-tRNA synthetase with relaxed tRNA specificity since it is able to aspartylate not only its cognate tRNA(Asp) but also tRNA(Asn). Reaction proceeds in two steps: L-aspartate is first activated by ATP to form Asp-AMP and then transferred to the acceptor end of tRNA(Asp/Asn). This Wolbachia sp. subsp. Brugia malayi (strain TRS) protein is Aspartate--tRNA(Asp/Asn) ligase.